The sequence spans 65 residues: DNA gyrase inhibitor YacG (65 aa).

Residues C10, C13, C29, and C33 each contribute to the Zn(2+) site. The interval 45-65 (EKAIPGAPDMSDSDGWSEDQY) is disordered. Residues 55 to 65 (SDSDGWSEDQY) show a composition bias toward acidic residues.

The protein belongs to the DNA gyrase inhibitor YacG family. In terms of assembly, interacts with GyrB. The cofactor is Zn(2+).

In terms of biological role, inhibits all the catalytic activities of DNA gyrase by preventing its interaction with DNA. Acts by binding directly to the C-terminal domain of GyrB, which probably disrupts DNA binding by the gyrase. This chain is DNA gyrase inhibitor YacG, found in Vibrio cholerae serotype O1 (strain ATCC 39315 / El Tor Inaba N16961).